Here is a 629-residue protein sequence, read N- to C-terminus: Pescadillo homolog (629 aa).

One can recognise a BRCT domain in the interval 321-414 (RLRTLFKGLK…QLLPTNKYFI (94 aa)). Disordered regions lie at residues 439–470 (KALLDPSLIETHAQSDEDSEDEAEKEEEETVD), 488–568 (EYKK…MVKP), and 598–629 (IEASEKEARKTAKREARKEAAAAAAKASKLGK). Residues Ser453 and Ser457 each carry the phosphoserine modification. Acidic residues-rich tracts occupy residues 454–470 (DEDSEDEAEKEEEETVD) and 498–523 (VNEDEEDPEDDDEDDDEEEAEEEELD). Positions 524–535 (EKSKRLQEEKQK) are enriched in basic and acidic residues. Positions 542–551 (KVHKVNKRQV) are enriched in basic residues. Composition is skewed to basic and acidic residues over residues 552 to 561 (HKAEVDEHRL) and 598 to 617 (IEASEKEARKTAKREARKEA). Residues 584 to 627 (KEKEEWLLRKKRRTIEASEKEARKTAKREARKEAAAAAAKASKL) are a coiled coil. Low complexity predominate over residues 618–629 (AAAAAKASKLGK).

This sequence belongs to the pescadillo family.

The protein resides in the nucleus. It is found in the nucleolus. The protein localises to the nucleoplasm. Required for maturation of ribosomal RNAs and formation of the large ribosomal subunit. The chain is Pescadillo homolog from Drosophila erecta (Fruit fly).